Reading from the N-terminus, the 312-residue chain is uncharacterized protein (312 aa).

Belongs to the asfivirus CP312R family.

The protein resides in the virion. This is an uncharacterized protein from African swine fever virus (strain Badajoz 1971 Vero-adapted) (Ba71V).